The chain runs to 235 residues: Protein GrpE (235 aa).

The segment covering 1 to 18 has biased composition (polar residues); sequence MTDGNQKPDGNSGEQVTV. Disordered stretches follow at residues 1–50 and 198–235; these read MTDG…DAAH and ESVD…PSGS. Over residues 19–35 the composition is skewed to basic and acidic residues; sequence TDKRRIDPETGEVRHVP.

It belongs to the GrpE family. Homodimer.

The protein localises to the cytoplasm. Functionally, participates actively in the response to hyperosmotic and heat shock by preventing the aggregation of stress-denatured proteins, in association with DnaK and GrpE. It is the nucleotide exchange factor for DnaK and may function as a thermosensor. Unfolded proteins bind initially to DnaJ; upon interaction with the DnaJ-bound protein, DnaK hydrolyzes its bound ATP, resulting in the formation of a stable complex. GrpE releases ADP from DnaK; ATP binding to DnaK triggers the release of the substrate protein, thus completing the reaction cycle. Several rounds of ATP-dependent interactions between DnaJ, DnaK and GrpE are required for fully efficient folding. The polypeptide is Protein GrpE (Mycobacterium bovis (strain BCG / Pasteur 1173P2)).